The primary structure comprises 82 residues: MNMDIEARVKKVITSCIAVDVDSINGQTHLVEDLYADSLDLIDIVFGLSEEFDISCNENDLPDMMTFADICRVVKKSLESRV.

In terms of domain architecture, Carrier spans 3–78 (MDIEARVKKV…DICRVVKKSL (76 aa)). Ser38 carries the O-(pantetheine 4'-phosphoryl)serine modification.

Post-translationally, 4'-phosphopantetheine is transferred from CoA to a specific serine of apo-IacP.

The protein resides in the cytoplasm. Functionally, acyl carrier protein. The chain is Probable acyl carrier protein IacP (iacP) from Salmonella typhimurium (strain SL1344).